Here is a 204-residue protein sequence, read N- to C-terminus: Large ribosomal subunit protein bL25 (204 aa).

Belongs to the bacterial ribosomal protein bL25 family. CTC subfamily. Part of the 50S ribosomal subunit; part of the 5S rRNA/L5/L18/L25 subcomplex. Contacts the 5S rRNA. Binds to the 5S rRNA independently of L5 and L18.

This is one of the proteins that binds to the 5S RNA in the ribosome where it forms part of the central protuberance. This is Large ribosomal subunit protein bL25 from Pseudoalteromonas translucida (strain TAC 125).